The following is a 239-amino-acid chain: Mannose-binding protein A (239 aa).

The signal sequence occupies residues 1–18 (MLLLPLLPVLLCVVSVSS). A disordered region spans residues 35-88 (ACGRDGRDGPKGEKGEPGQGLRGLQGPPGKLGPPGSVGSPGSPGPKGQKGDHGD). The Collagen-like domain occupies 37 to 89 (GRDGRDGPKGEKGEPGQGLRGLQGPPGKLGPPGSVGSPGSPGPKGQKGDHGDN). Basic and acidic residues predominate over residues 38–50 (RDGRDGPKGEKGE). Position 44 is a 4-hydroxyproline (proline 44). Residues lysine 45 and lysine 48 each carry the 5-hydroxylysine modification. Residues lysine 45 and lysine 48 are each glycosylated (O-linked (Gal...) hydroxylysine). A 4-hydroxyproline mark is found at proline 51, proline 62, proline 68, proline 74, and proline 79. The span at 58–74 (LQGPPGKLGPPGSVGSP) shows a compositional bias: low complexity. 2 positions are modified to 5-hydroxylysine: lysine 80 and lysine 83. 2 O-linked (Gal...) hydroxylysine glycosylation sites follow: lysine 80 and lysine 83. The C-type lectin domain maps to 144-239 (SLCTELQGTV…SFKAVCEFPA (96 aa)). 2 disulfides stabilise this stretch: cysteine 146–cysteine 235 and cysteine 213–cysteine 227. Ca(2+) contacts are provided by aspartate 179, glutamate 183, glutamate 203, asparagine 205, glutamate 211, aspartate 212, asparagine 223, and aspartate 224. Residues 203–211 (EPNNHGSGE) form a calcium-dependent carbohydrate binding region.

In terms of assembly, homotrimer. Forms higher oligomeric complexes formed by the association of two, three or more homotrimers. Oligomerization occurs in the endoplasmic reticulum. Interacts with MASP1 and MASP2. Hydroxylated on lysine and proline residues within the collagen-like domain. Post-translationally, O-glycosylated. O-linked glycans on hydroxylysine residues consist of Glc-Gal disaccharides bound to the oxygen atom of post-translationally added hydroxyl groups. In terms of tissue distribution, detected in liver and blood serum (at protein level). Detected in liver.

Its subcellular location is the secreted. Its function is as follows. Calcium-dependent lectin. Plays a role in the innate immune response by binding mannose, fucose and N-acetylglucosamine moieties on different microorganisms and mediating activation of the lectin complement pathway. Binds to late apoptotic cells, as well as to apoptotic blebs and to necrotic cells, but not to early apoptotic cells, facilitating their uptake by macrophages. This Mus musculus (Mouse) protein is Mannose-binding protein A (Mbl1).